The sequence spans 582 residues: BTB/POZ domain and ankyrin repeat-containing protein NPR1 (582 aa).

A compositionally biased stretch (polar residues) spans 1–12 (MEPPTSHVTNAF). The disordered stretch occupies residues 1–27 (MEPPTSHVTNAFSDSDSASVEEGDADA). The BTB domain occupies 55–140 (ADARIAVPGG…VLDYLYSGRV (86 aa)). Residues 147–161 (ACLCVDEDCAHVGCH) form a C2HC NPR-type zinc finger. Residues Cys-150, Cys-155, His-157, and Cys-160 each coordinate Zn(2+). 4 ANK repeats span residues 229 to 258 (RSNLDMITLEKSLPPDVIKQIIDARLSLGL), 269 to 299 (KHVRRIHRALDSDDVELVRMLLTEGQTNLDD), 301 to 328 (FALHYAVEHCDSKITTELLDLALADVNH), and 332 to 361 (RGYTVLHIAARRREPKIIVSLLTKGARPAD). The salicylic acid-binding core (SBC) stretch occupies residues 391-526 (PSPKDRLCIE…VLDKIMDDET (136 aa)). Arg-436 is a binding site for salicylate. Disordered regions lie at residues 525-544 (ETDPVSLGRDTSAEKRKRFH) and 551-582 (QKAFHEDKEENDRSGLSSSSSSTSIGAIRPRR). The segment covering 553–563 (AFHEDKEENDR) has biased composition (basic and acidic residues). Over residues 564–574 (SGLSSSSSSTS) the composition is skewed to low complexity.

Belongs to the plant 'ANKYRIN-BTB/POZ' family. 'NPR1-like' subfamily. In terms of assembly, oligomer in an uninduced state; disulfide-linked. Forms activated monomer upon changes in cellular redox potential. Interacts with TGA2.2. Interacts with NRR.

It is found in the cytoplasm. It localises to the nucleus. The protein localises to the nuclear body. It functions in the pathway protein modification; protein ubiquitination. Functionally, salicylic acid (SA)-binding substrate-specific adapter of an E3 ubiquitin-protein ligase complex (CUL3-RBX1-BTB) which mediates the ubiquitination and subsequent proteasomal degradation of target proteins. Transcription cofactor that represses gene expression in the absence of salicylic acid (SA), when attached to negative cis-elements (W-box) with WRKY transcription factors, but stimulates gene expression upon activation by SA, when sumoylated and attached to positive cis-elements (as-1) with TGA transcription factors, thus confering immunity through a series of gene regulations ending in a significant increase in antimicrobial and defense genes expression. Key positive factor of disease resistance. Involved in defense response against the bacterial blight disease caused by Xanthomonas oryzae pv. oryzae (Xoo). Plants over-expressing NPR1/NH1 acquire high levels of resistance to Xoo, express constitutively defense genes and develop lesion-mimic spots on leaves at pre-flowering stage. Involved in basal resistance to the blast pathogen Magnaporthe oryzae. Plants over-expressing NPR1/NH1 have increased resistance to M.oryzae infection. Plays an essential role in benzothiadiazole (BTH)-induced resistance to the blast fungus disease caused by Magnaporthe oryzae. Functions as a transcriptional coactivator of TGA2.1 and LG2 in vitro. Involved in defense response against herbivore. Plants silencing NPR1/NH1 have increased herbivore-induced trypsin proteinase inhibitors and volatiles, which reduces the performance of the striped stem borer (SSB) Chilo suppressalis. In Oryza sativa subsp. indica (Rice), this protein is BTB/POZ domain and ankyrin repeat-containing protein NPR1.